The sequence spans 216 residues: Probable GTP-binding protein EngB (216 aa).

Residues 26 to 210 (PMATIIFAGR…KNRIFEVIRE (185 aa)) enclose the EngB-type G domain. Residues 34 to 41 (GRSNVGKS), 59 to 63 (GVTRK), 76 to 79 (DMPG), 156 to 159 (NKLD), and 189 to 191 (ISA) contribute to the GTP site. Residues Ser41 and Thr61 each coordinate Mg(2+).

The protein belongs to the TRAFAC class TrmE-Era-EngA-EngB-Septin-like GTPase superfamily. EngB GTPase family. The cofactor is Mg(2+).

In terms of biological role, necessary for normal cell division and for the maintenance of normal septation. The sequence is that of Probable GTP-binding protein EngB from Pyrococcus horikoshii (strain ATCC 700860 / DSM 12428 / JCM 9974 / NBRC 100139 / OT-3).